A 388-amino-acid polypeptide reads, in one-letter code: Carbohydrate sulfotransferase 4 (388 aa).

The Cytoplasmic portion of the chain corresponds to 1-7 (MMLLKKG). A helical; Signal-anchor for type II membrane protein transmembrane segment spans residues 8 to 28 (RLLMFLGSQVIVVALFIHMSV). The Lumenal segment spans residues 29–388 (HRHLSQREES…HILGQVFREG (360 aa)). 3'-phosphoadenylyl sulfate contacts are provided by residues 50 to 56 (WRSGSSF) and 204 to 212 (RDPRAVFRS). N-linked (GlcNAc...) asparagine glycosylation is found at asparagine 307, asparagine 328, and asparagine 369.

It belongs to the sulfotransferase 1 family. Gal/GlcNAc/GalNAc subfamily. Monomer. Specifically expressed in high endothelial venules (HEV) of peripheral lymph nodes.

It localises to the golgi apparatus membrane. The enzyme catalyses 3-O-{N-acetyl-beta-D-glucosaminyl-(1-&gt;3)-beta-D-galactosyl-(1-&gt;3)-N-acetyl-alpha-D-galactosaminyl}-L-threonyl-[protein] + 3'-phosphoadenylyl sulfate = 3-O-{6-O-sulfo-N-acetyl-beta-D-glucosaminyl-(1-&gt;3)-beta-D-galactosyl-(1-&gt;3)-N-acetyl-alpha-D-galactosaminyl}-L-threonyl-[protein] + adenosine 3',5'-bisphosphate + H(+). It catalyses the reaction 3-O-{N-acetyl-beta-D-glucosaminyl-(1-&gt;3)-beta-D-galactosyl-(1-&gt;3)-N-acetyl-alpha-D-galactosaminyl}-L-seryl-[protein] + 3'-phosphoadenylyl sulfate = 3-O-{6-O-sulfo-N-acetyl-beta-D-glucosaminyl-(1-&gt;3)-beta-D-galactosyl-(1-&gt;3)-N-acetyl-alpha-D-galactosaminyl}-L-seryl-[protein] + adenosine 3',5'-bisphosphate + H(+). The catalysed reaction is a 3-O-{beta-D-galactosyl-(1-&gt;3)-[N-acetyl-beta-D-glucosaminyl-(1-&gt;6)]-N-acetyl-alpha-D-galactosaminyl}-L-threonyl-[protein] + 3'-phosphoadenylyl sulfate = 3-O-{beta-D-galactosyl-(1-&gt;3)-[6-O-sulfo-N-acetyl-beta-D-glucosaminyl-(1-&gt;6)]-N-acetyl-alpha-D-galactosaminyl}-L-threonyl-[protein] + adenosine 3',5'-bisphosphate + H(+). It carries out the reaction 3-O-{beta-D-galactosyl-(1-&gt;3)-[N-acetyl-beta-D-glucosaminyl-(1-&gt;6)]-N-acetyl-alpha-D-galactosaminyl}-L-seryl-[protein] + 3'-phosphoadenylyl sulfate = 3-O-{beta-D-galactosyl-(1-&gt;3)-[6-O-sulfo-N-acetyl-beta-D-glucosaminyl-(1-&gt;6)]-N-acetyl-alpha-D-galactosaminyl}-L-seryl-[protein] + adenosine 3',5'-bisphosphate + H(+). The protein operates within protein modification; carbohydrate sulfation. Functionally, sulfotransferase involved in SELL/L-selectin ligand biosynthesis pathway. Catalyzes the transfer of the sulfate group from 3'-phospho-5'-adenylyl sulfate (PAPS) onto the hydroxyl group at C-6 position of the non-reducing N-acetylglucosamine (GlcNAc) residue within O-linked mucin-type glycans. Contributes to generate sialyl 6-sulfo Lewis X determinant (also known as MECA-79 epitope) for SELL recognition, a prerequisite for continuous lymphocyte homing into peripheral lymph nodes and antigen immune surveillance. Transfers the sulfate group primarily on core 2 GlcNAcbeta1-6(Galbeta1-3)GalNAcalphaSer/Thr and extended core 1 GlcNAcbeta1-3Galbeta1-3GalNAcalphaSer/Thr based O-linked glycans on CD34 and GLYCAM1 peripheral node addressins (PNAds) expressed on the lumenal side of high endothelial venules (HEVs). The recognition of PNAds by SELL initiates a multistep process comprising tethering and rolling of blood lymphocytes on HEVs against the blood flow, followed by chemokine signaling, integrin-mediated lymphocyte adhesion onto endothelial cells and lymphocyte transendothelial migration. Modulates rolling velocity and differential T and B lymphocyte recruitment into peripheral lymph nodes, with a major role in B lymphocyte homing. Might be redundant in sulfation of MADCAM1 and lymphocyte trafficking to mesenteric lymph nodes. Can also sulfonate core 3 GlcNAcbeta1-3GalNAc-R based glycans as well as GlcNAcbeta1-3Galbeta1-Glc, GlcNAcbeta1-6ManOMe and GlcNAcbeta1-2Man oligosaccharides, which might be ectopically expressed during tumorigenesis. This Mus musculus (Mouse) protein is Carbohydrate sulfotransferase 4 (Chst4).